Reading from the N-terminus, the 170-residue chain is Probable chorismate pyruvate-lyase (170 aa).

Substrate-binding residues include arginine 77, leucine 114, and glutamate 157.

It belongs to the UbiC family.

It is found in the cytoplasm. The enzyme catalyses chorismate = 4-hydroxybenzoate + pyruvate. It participates in cofactor biosynthesis; ubiquinone biosynthesis. Functionally, removes the pyruvyl group from chorismate, with concomitant aromatization of the ring, to provide 4-hydroxybenzoate (4HB) for the ubiquinone pathway. The sequence is that of Probable chorismate pyruvate-lyase from Pasteurella multocida (strain Pm70).